We begin with the raw amino-acid sequence, 393 residues long: HORMA domain-containing protein 1 (393 aa).

One can recognise an HORMA domain in the interval Gln24–Val226. Residues Ser322–Ile393 form a disordered region. The segment covering Lys352–Gln361 has biased composition (basic and acidic residues). Residue Ser375 is modified to Phosphoserine. The Nuclear localization signal signature appears at Lys382–Lys385.

In terms of assembly, interacts with HORMAD2. Interacts with IHO1. In terms of processing, phosphorylated at Ser-376 in a SPO11-dependent manner.

The protein resides in the nucleus. Its subcellular location is the chromosome. Its function is as follows. Plays a key role in meiotic progression. Regulates 3 different functions during meiosis: ensures that sufficient numbers of processed DNA double-strand breaks (DSBs) are available for successful homology search by increasing the steady-state numbers of single-stranded DSB ends. Promotes synaptonemal-complex formation independently of its role in homology search. Plays a key role in the male mid-pachytene checkpoint and the female meiotic prophase checkpoint: required for efficient build-up of ATR activity on unsynapsed chromosome regions, a process believed to form the basis of meiotic silencing of unsynapsed chromatin (MSUC) and meiotic prophase quality control in both sexes. The protein is HORMA domain-containing protein 1 (HORMAD1) of Bos taurus (Bovine).